The chain runs to 126 residues: Thiocyanate hydrolase subunit alpha (126 aa).

Heterododecamer consisting of 4 alpha, 4 beta, and 4 gamma subunits.

It catalyses the reaction thiocyanate + H2O + 2 H(+) = carbonyl sulfide + NH4(+). It functions in the pathway organosulfur degradation; thiocyanate degradation. In terms of biological role, involved in the degradation of thiocyanate. The sequence is that of Thiocyanate hydrolase subunit alpha (scnA) from Thiobacillus thioparus.